A 632-amino-acid polypeptide reads, in one-letter code: DNA topoisomerase 4 subunit B (632 aa).

ATP contacts are provided by residues Tyr-5, Asn-42, Asp-69, 110 to 116, and Lys-334; that span reads GLHGVGI. The Toprim domain maps to 412–525; the sequence is TELFLVEGDS…DGHVYVAMPP (114 aa). Positions 418, 490, and 492 each coordinate Mg(2+).

It belongs to the type II topoisomerase family. ParE type 1 subfamily. As to quaternary structure, heterotetramer composed of ParC and ParE. Mg(2+) is required as a cofactor. Requires Mn(2+) as cofactor. Ca(2+) serves as cofactor.

The enzyme catalyses ATP-dependent breakage, passage and rejoining of double-stranded DNA.. Its function is as follows. Topoisomerase IV is essential for chromosome segregation. It relaxes supercoiled DNA. Performs the decatenation events required during the replication of a circular DNA molecule. In Haemophilus influenzae (strain ATCC 51907 / DSM 11121 / KW20 / Rd), this protein is DNA topoisomerase 4 subunit B.